The sequence spans 879 residues: Valine--tRNA ligase (879 aa).

A 'HIGH' region motif is present at residues 45-55; sequence PNVTGKLHLGH. Positions 521–525 match the 'KMSKS' region motif; sequence KMSKS. K524 contacts ATP. Positions 806 to 879 form a coiled coil; that stretch reads LTELVNVDEE…ERMKELKESK (74 aa).

Belongs to the class-I aminoacyl-tRNA synthetase family. ValS type 1 subfamily. As to quaternary structure, monomer.

The protein resides in the cytoplasm. The enzyme catalyses tRNA(Val) + L-valine + ATP = L-valyl-tRNA(Val) + AMP + diphosphate. Its function is as follows. Catalyzes the attachment of valine to tRNA(Val). As ValRS can inadvertently accommodate and process structurally similar amino acids such as threonine, to avoid such errors, it has a 'posttransfer' editing activity that hydrolyzes mischarged Thr-tRNA(Val) in a tRNA-dependent manner. This Lactobacillus johnsonii (strain CNCM I-12250 / La1 / NCC 533) protein is Valine--tRNA ligase.